The chain runs to 211 residues: C-type lectin domain-containing protein 158 (211 aa).

Residues 1-16 (MQKFILSAFVVALVAA) form the signal peptide.

This Caenorhabditis elegans protein is C-type lectin domain-containing protein 158 (clec-158).